We begin with the raw amino-acid sequence, 130 residues long: Nascent polypeptide-associated complex protein (130 aa).

The NAC-A/B domain occupies 8–75; it reads PKMMRQMQKM…AKNIKKDDIK (68 aa).

It belongs to the NAC-alpha family. In terms of assembly, homodimer. Interacts with the ribosome. Binds ribosomal RNA.

In terms of biological role, contacts the emerging nascent chain on the ribosome. The sequence is that of Nascent polypeptide-associated complex protein from Methanococcus aeolicus (strain ATCC BAA-1280 / DSM 17508 / OCM 812 / Nankai-3).